Here is a 135-residue protein sequence, read N- to C-terminus: uncharacterized protein (135 aa).

Transmembrane regions (helical) follow at residues 13–35 (AKVI…AMYL), 82–101 (VAVF…LLSI), and 108–130 (IYRI…PLIL).

The protein resides in the cell membrane. This is an uncharacterized protein from Archaeoglobus fulgidus (strain ATCC 49558 / DSM 4304 / JCM 9628 / NBRC 100126 / VC-16).